Reading from the N-terminus, the 70-residue chain is Large ribosomal subunit protein eL38 (70 aa).

This sequence belongs to the eukaryotic ribosomal protein eL38 family.

This Plutella xylostella (Diamondback moth) protein is Large ribosomal subunit protein eL38 (RpL38).